The following is a 286-amino-acid chain: Phosphate import ATP-binding protein PstB (286 aa).

Positions 40-281 constitute an ABC transporter domain; that stretch reads VVARDFSIYY…PKDSMTEDYI (242 aa). ATP is bound at residue 72-79; the sequence is GPSGCGKS.

This sequence belongs to the ABC transporter superfamily. Phosphate importer (TC 3.A.1.7) family. In terms of assembly, the complex is composed of two ATP-binding proteins (PstB), two transmembrane proteins (PstC and PstA) and a solute-binding protein (PstS).

It is found in the cell inner membrane. The enzyme catalyses phosphate(out) + ATP + H2O = ADP + 2 phosphate(in) + H(+). Its function is as follows. Part of the ABC transporter complex PstSACB involved in phosphate import. Responsible for energy coupling to the transport system. This is Phosphate import ATP-binding protein PstB from Chlorobaculum tepidum (strain ATCC 49652 / DSM 12025 / NBRC 103806 / TLS) (Chlorobium tepidum).